Here is a 434-residue protein sequence, read N- to C-terminus: MGYQKPKGTADILPGESDQWQLVEKTARDVFARYQFKEIRTPLFESYDVFSRSSGDTSDIVSKEMYDFMDKGDRHIALRPEGTAGVVRAFVENKLYGPEHQKPYKVYYMGPMFRYERPQSGRQRQFHQIGVESFGSESPAVDVEVISMAMRLLREFKITDLKLAINTLGDAASRAAYHEALVNYLEPHFEELSDDSKVRLHKNPLRVLDSKDAKDQEIVKDAPVILDYLTDEAKVHFNTVKTLLESLNIPYEVDTEMVRGLDYYNHTIFEIMTSNKVLGRGYTTVLAGGRYNGLVEQLGGPDMPGVGFGLGVERLLLLMNAQNSDLVAAPVLDAYVVGIGAETSATTLHLVESLREAGLTADRDYLDRKPKAQFKTANKLNAQFVVTIGESELADKTAHVKDMTSGVEITVPLTTLEADFAAVKNELKAQEENE.

The protein belongs to the class-II aminoacyl-tRNA synthetase family. Homodimer.

It is found in the cytoplasm. It carries out the reaction tRNA(His) + L-histidine + ATP = L-histidyl-tRNA(His) + AMP + diphosphate + H(+). The protein is Histidine--tRNA ligase of Latilactobacillus sakei subsp. sakei (strain 23K) (Lactobacillus sakei subsp. sakei).